A 628-amino-acid chain; its full sequence is Propionate--CoA ligase (628 aa).

It belongs to the ATP-dependent AMP-binding enzyme family.

The enzyme catalyses propanoate + ATP + CoA = propanoyl-CoA + AMP + diphosphate. The protein operates within organic acid metabolism; propanoate degradation. In terms of biological role, catalyzes the synthesis of propionyl-CoA from propionate and CoA. Also converts acetate to acetyl-CoA but with a lower specific activity. This Escherichia coli (strain K12) protein is Propionate--CoA ligase (prpE).